The chain runs to 386 residues: Cell division protein FtsZ (386 aa).

Residues 21 to 25 (GGGGN), 108 to 110 (GTG), glutamate 139, arginine 143, and asparagine 187 each bind GTP.

Belongs to the FtsZ family. In terms of assembly, homodimer. Polymerizes to form a dynamic ring structure in a strictly GTP-dependent manner. Interacts directly with several other division proteins.

The protein localises to the cytoplasm. In terms of biological role, essential cell division protein that forms a contractile ring structure (Z ring) at the future cell division site. The regulation of the ring assembly controls the timing and the location of cell division. One of the functions of the FtsZ ring is to recruit other cell division proteins to the septum to produce a new cell wall between the dividing cells. Binds GTP and shows GTPase activity. In Coxiella burnetii (strain RSA 493 / Nine Mile phase I), this protein is Cell division protein FtsZ.